The following is a 522-amino-acid chain: Response regulator mcs4 (522 aa).

The interval 148 to 274 is disordered; the sequence is DSLESPVSAP…RSISHSSLYT (127 aa). Positions 174 to 194 are enriched in polar residues; it reads NLRNASRTRSHQTLPSSNVNK. A compositionally biased stretch (basic and acidic residues) spans 244–255; it reads RSDESTAEKLAK. Over residues 260 to 274 the composition is skewed to polar residues; it reads TPTNSRSISHSSLYT. Residues 363–505 form the Response regulatory domain; the sequence is NVLIVEDNII…WLEKKITEWG (143 aa). D412 carries the post-translational modification 4-aspartylphosphate.

The protein resides in the cytoplasm. Response regulator that coordinately controls the stress activated wak1-wis1-sty1 MAP kinase pathway and fission yeast cell cycle. The polypeptide is Response regulator mcs4 (mcs4) (Schizosaccharomyces pombe (strain 972 / ATCC 24843) (Fission yeast)).